The primary structure comprises 464 residues: RYamide receptor (464 aa).

The Extracellular portion of the chain corresponds to methionine 1 to lysine 105. 3 N-linked (GlcNAc...) asparagine glycosylation sites follow: asparagine 49, asparagine 79, and asparagine 85. The helical transmembrane segment at isoleucine 106–valine 126 threads the bilayer. The Cytoplasmic segment spans residues cysteine 127–alanine 148. Residues isoleucine 149–leucine 169 traverse the membrane as a helical segment. Over asparagine 170–serine 189 the chain is Extracellular. A glycan (N-linked (GlcNAc...) asparagine) is linked at asparagine 183. Residues valine 190 to tryptophan 210 form a helical membrane-spanning segment. Residues proline 211 to alanine 221 are Cytoplasmic-facing. A helical transmembrane segment spans residues threonine 222–valine 242. At serine 243 to tyrosine 274 the chain is on the extracellular side. Residues threonine 275–alanine 295 traverse the membrane as a helical segment. At arginine 296–methionine 329 the chain is on the cytoplasmic side. Residues leucine 330–leucine 350 traverse the membrane as a helical segment. Over asparagine 351–tyrosine 363 the chain is Extracellular. The chain crosses the membrane as a helical span at residues valine 364–cysteine 384. The Cytoplasmic portion of the chain corresponds to tyrosine 385–arginine 464.

This sequence belongs to the G-protein coupled receptor 1 family.

Its subcellular location is the cell membrane. Its function is as follows. Receptor for the neuropeptides RYamide-1 and RYamide-2. The activity of this receptor is mediated by G proteins which activate a phosphatidyl-inositol-calcium second messenger system. RYamide signaling may suppress feeding behavior. This chain is RYamide receptor, found in Drosophila melanogaster (Fruit fly).